The following is a 443-amino-acid chain: Serine/threonine-protein phosphatase 2A 55 kDa regulatory subunit B beta isoform (443 aa).

WD repeat units lie at residues 22 to 61 (TEAD…KNQV), 87 to 128 (EIEE…KRPE), 171 to 209 (AHTY…QSFN), and 220 to 260 (ELTE…CVTG). Serine 275 is modified (phosphoserine). WD repeat units follow at residues 279–317 (KLSS…RPIE), 334–375 (ENDC…DVTL), and 410–442 (DFSK…QDKV). Threonine 298 carries the post-translational modification Phosphothreonine.

Belongs to the phosphatase 2A regulatory subunit B family. As to quaternary structure, PP2A consists of a common heterodimeric core enzyme, composed of a 36 kDa catalytic subunit (subunit C) and a 65 kDa constant regulatory subunit (PR65 or subunit A), that associates with a variety of regulatory subunits. Proteins that associate with the core dimer include three families of regulatory subunits B (the R2/B/PR55/B55, R3/B''/PR72/PR130/PR59 and R5/B'/B56 families), the 48 kDa variable regulatory subunit, viral proteins, and cell signaling molecules. Interacts with TOMM22. Interacts with IER5 (via N- and C-terminal regions). In terms of tissue distribution, brain.

It localises to the cytoplasm. The protein resides in the cytoskeleton. Its subcellular location is the membrane. In terms of biological role, the B regulatory subunit might modulate substrate selectivity and catalytic activity, and might also direct the localization of the catalytic enzyme to a particular subcellular compartment. The polypeptide is Serine/threonine-protein phosphatase 2A 55 kDa regulatory subunit B beta isoform (PPP2R2B) (Sus scrofa (Pig)).